Here is an 84-residue protein sequence, read N- to C-terminus: MGRYTTDQVQVYVLVIVLCTFFSTLQARSLRDHPLIHKNIDSRSLLQKLRIHISNHKQVRDISGDRLSPAGPDPQHNGRSPPRK.

An N-terminal signal peptide occupies residues 1-29; it reads MGRYTTDQVQVYVLVIVLCTFFSTLQARS. Residues 57 to 84 form a disordered region; it reads KQVRDISGDRLSPAGPDPQHNGRSPPRK. Pro69 and Pro72 each carry hydroxyproline. A glycan (O-linked (Ara...) hydroxyproline) is linked at Pro72.

It belongs to the CLV3/ESR signal peptide family. The O-glycosylation (arabinosylation) of the hydroxyproline Pro-72 enhances binding affinity of the CLE13p peptide for its receptor. Expressed in young nodules throughout the central tissue. Expressed in the apical region of elongated nodules, corresponding to the meristematic and early infection zones.

Its subcellular location is the secreted. The protein localises to the extracellular space. In terms of biological role, signaling peptide involved in the regulation of nodulation. Moves from root to shoot to function with the receptor kinase SUNN, in a signaling pathway that plays roles during cellular differentiation, both at the onset of nodulation, and later during nodule meristem development and subsequent homeostasis. Interacts with SUNN signaling to control nodule numbers. SUNN is involved in the autoregulation of nodulation (AON), a long distance systemic signaling from root to shoot and back again, which allows legumes to limit the number of root nodules formed based on available nitrogen and previous rhizobial colonization. The chain is CLAVATA3/ESR (CLE)-related protein 13 from Medicago truncatula (Barrel medic).